The following is a 149-amino-acid chain: Ribose-5-phosphate isomerase B (149 aa).

Aspartate 9–histidine 10 lines the D-ribulose 5-phosphate pocket. Cysteine 66 acts as the Proton acceptor in catalysis. Glycine 67–glycine 71 serves as a coordination point for D-ribulose 5-phosphate. The active-site Proton donor is the histidine 99. The D-ribulose 5-phosphate site is built by asparagine 100, arginine 110, arginine 133, and arginine 137.

Belongs to the LacAB/RpiB family. As to quaternary structure, homodimer, and homotetramer.

It catalyses the reaction aldehydo-D-ribose 5-phosphate = D-ribulose 5-phosphate. It carries out the reaction D-allose 6-phosphate = D-allulose 6-phosphate. The protein operates within carbohydrate degradation; pentose phosphate pathway; D-ribose 5-phosphate from D-ribulose 5-phosphate (non-oxidative stage): step 1/1. Inhibited by iodoacetate and glucose 6-phosphate. Catalyzes the interconversion of ribulose-5-P and ribose-5-P. It probably also has activity on D-allose 6-phosphate. This chain is Ribose-5-phosphate isomerase B, found in Escherichia coli (strain K12).